We begin with the raw amino-acid sequence, 323 residues long: Acetyl-coenzyme A carboxylase carboxyl transferase subunit alpha (323 aa).

Residues 36–293 (ELELLSAKAQ…KEEVVKNLQI (258 aa)) form the CoA carboxyltransferase C-terminal domain.

It belongs to the AccA family. As to quaternary structure, acetyl-CoA carboxylase is a heterohexamer composed of biotin carboxyl carrier protein (AccB), biotin carboxylase (AccC) and two subunits each of ACCase subunit alpha (AccA) and ACCase subunit beta (AccD).

It localises to the cytoplasm. It catalyses the reaction N(6)-carboxybiotinyl-L-lysyl-[protein] + acetyl-CoA = N(6)-biotinyl-L-lysyl-[protein] + malonyl-CoA. Its pathway is lipid metabolism; malonyl-CoA biosynthesis; malonyl-CoA from acetyl-CoA: step 1/1. Functionally, component of the acetyl coenzyme A carboxylase (ACC) complex. First, biotin carboxylase catalyzes the carboxylation of biotin on its carrier protein (BCCP) and then the CO(2) group is transferred by the carboxyltransferase to acetyl-CoA to form malonyl-CoA. The chain is Acetyl-coenzyme A carboxylase carboxyl transferase subunit alpha from Carboxydothermus hydrogenoformans (strain ATCC BAA-161 / DSM 6008 / Z-2901).